The primary structure comprises 71 residues: uncharacterized protein (71 aa).

One can recognise a Sm domain in the interval 15-71 (PNFEYARRLNGKKVKIFLRNGEVLDAEVTGVSNYEIMVKVGDRNLLVFKHAIDYIEY).

This is an uncharacterized protein from Methanocaldococcus jannaschii (strain ATCC 43067 / DSM 2661 / JAL-1 / JCM 10045 / NBRC 100440) (Methanococcus jannaschii).